The following is a 363-amino-acid chain: Carbamoyl phosphate synthase small chain (363 aa).

The interval 1 to 172 (MTKRILMLED…AFASPGDGKR (172 aa)) is CPSase. L-glutamine contacts are provided by Ser46, Gly220, and Gly222. Positions 172–359 (RVVLVDYGVK…MEMMNGKEEG (188 aa)) constitute a Glutamine amidotransferase type-1 domain. Catalysis depends on Cys247, which acts as the Nucleophile. L-glutamine is bound by residues Leu248, Gln251, Asn289, Gly291, and Tyr292. Catalysis depends on residues His332 and Glu334.

It belongs to the CarA family. As to quaternary structure, composed of two chains; the small (or glutamine) chain promotes the hydrolysis of glutamine to ammonia, which is used by the large (or ammonia) chain to synthesize carbamoyl phosphate. Tetramer of heterodimers (alpha,beta)4.

It catalyses the reaction hydrogencarbonate + L-glutamine + 2 ATP + H2O = carbamoyl phosphate + L-glutamate + 2 ADP + phosphate + 2 H(+). It carries out the reaction L-glutamine + H2O = L-glutamate + NH4(+). It participates in amino-acid biosynthesis; L-arginine biosynthesis; carbamoyl phosphate from bicarbonate: step 1/1. Its pathway is pyrimidine metabolism; UMP biosynthesis via de novo pathway; (S)-dihydroorotate from bicarbonate: step 1/3. Small subunit of the glutamine-dependent carbamoyl phosphate synthetase (CPSase). CPSase catalyzes the formation of carbamoyl phosphate from the ammonia moiety of glutamine, carbonate, and phosphate donated by ATP, constituting the first step of 2 biosynthetic pathways, one leading to arginine and/or urea and the other to pyrimidine nucleotides. The small subunit (glutamine amidotransferase) binds and cleaves glutamine to supply the large subunit with the substrate ammonia. In Listeria monocytogenes serovar 1/2a (strain ATCC BAA-679 / EGD-e), this protein is Carbamoyl phosphate synthase small chain.